The primary structure comprises 171 residues: 3-hydroxydecanoyl-[acyl-carrier-protein] dehydratase (171 aa).

The active site involves histidine 70.

This sequence belongs to the thioester dehydratase family. FabA subfamily. As to quaternary structure, homodimer.

It localises to the cytoplasm. The enzyme catalyses a (3R)-hydroxyacyl-[ACP] = a (2E)-enoyl-[ACP] + H2O. The catalysed reaction is (3R)-hydroxydecanoyl-[ACP] = (2E)-decenoyl-[ACP] + H2O. It catalyses the reaction (2E)-decenoyl-[ACP] = (3Z)-decenoyl-[ACP]. It functions in the pathway lipid metabolism; fatty acid biosynthesis. Necessary for the introduction of cis unsaturation into fatty acids. Catalyzes the dehydration of (3R)-3-hydroxydecanoyl-ACP to E-(2)-decenoyl-ACP and then its isomerization to Z-(3)-decenoyl-ACP. Can catalyze the dehydratase reaction for beta-hydroxyacyl-ACPs with saturated chain lengths up to 16:0, being most active on intermediate chain length. The protein is 3-hydroxydecanoyl-[acyl-carrier-protein] dehydratase of Shewanella sp. (strain MR-4).